Consider the following 116-residue polypeptide: Large ribosomal subunit protein bL19 (116 aa).

It belongs to the bacterial ribosomal protein bL19 family.

This protein is located at the 30S-50S ribosomal subunit interface and may play a role in the structure and function of the aminoacyl-tRNA binding site. The protein is Large ribosomal subunit protein bL19 of Clostridium botulinum (strain Eklund 17B / Type B).